The following is a 141-amino-acid chain: Hemoglobin subunit alpha (141 aa).

The Globin domain maps to 1-141 (VLSPDDKKHV…VSTVLTSKYR (141 aa)). Ser-3 carries the phosphoserine modification. Lys-7 and Lys-11 each carry N6-succinyllysine. An N6-acetyllysine; alternate modification is found at Lys-16. Lys-16 is modified (N6-succinyllysine; alternate). Residue Tyr-24 is modified to Phosphotyrosine. At Ser-35 the chain carries Phosphoserine. Lys-40 carries the post-translational modification N6-succinyllysine. A Phosphoserine modification is found at Ser-49. An O2-binding site is contributed by His-58. Residue His-87 coordinates heme b. Position 102 is a phosphoserine (Ser-102). Thr-108 bears the Phosphothreonine mark. Phosphoserine occurs at positions 124 and 131. Residues Thr-134 and Thr-137 each carry the phosphothreonine modification. Phosphoserine is present on Ser-138.

This sequence belongs to the globin family. In terms of assembly, heterotetramer of two alpha chains and two beta chains. As to expression, red blood cells.

Functionally, involved in oxygen transport from the lung to the various peripheral tissues. Hemopressin acts as an antagonist peptide of the cannabinoid receptor CNR1. Hemopressin-binding efficiently blocks cannabinoid receptor CNR1 and subsequent signaling. This Cercocebus atys (Sooty mangabey) protein is Hemoglobin subunit alpha (HBA).